We begin with the raw amino-acid sequence, 354 residues long: Cysteine proteinase 1 (354 aa).

Positions 1 to 24 are cleaved as a signal peptide; that stretch reads MARRNPLLFAIVVTILFVVCYGSA. A propeptide spans 25-125 (activation peptide); that stretch reads LIAQTPPPVD…HKEDVHVDDS (101 aa). 3 cysteine pairs are disulfide-bonded: Cys150/Cys191, Cys184/Cys229, and Cys282/Cys330. Cys153 is an active-site residue. Asn208 carries N-linked (GlcNAc...) asparagine glycosylation. Residues His289 and Asn309 contribute to the active site.

This sequence belongs to the peptidase C1 family.

Functionally, the cysteine proteinases have a potential role in host-parasite interaction and virulence. This is Cysteine proteinase 1 (CYS1) from Leishmania pifanoi.